Here is an 80-residue protein sequence, read N- to C-terminus: Protein FAM229B (80 aa).

The disordered stretch occupies residues 1–44 (MPFQFGTQPRRFPVEGGDSSIELEPGLSSSAACNGKEMSPTRQL).

This sequence belongs to the FAM229 family.

This chain is Protein FAM229B (FAM229B), found in Homo sapiens (Human).